A 478-amino-acid polypeptide reads, in one-letter code: GDP-fucose protein O-fucosyltransferase 3 (478 aa).

Over 1–9 (MVRIQRGKL) the chain is Cytoplasmic. A helical; Signal-anchor for type II membrane protein transmembrane segment spans residues 10–30 (LAFCLCVMATVFLLITLQVVV). The Lumenal segment spans residues 31 to 478 (ELGKFEGKKF…QEFWALVFKD (448 aa)). 2 N-linked (GlcNAc...) asparagine glycosylation sites follow: asparagine 110 and asparagine 168. Cysteine 389 and cysteine 392 form a disulfide bridge.

It belongs to the glycosyltransferase 10 family.

It is found in the endoplasmic reticulum membrane. It carries out the reaction L-threonyl-[protein] + GDP-beta-L-fucose = 3-O-(alpha-L-fucosyl)-L-threonyl-[protein] + GDP + H(+). The catalysed reaction is L-seryl-[protein] + GDP-beta-L-fucose = 3-O-(alpha-L-fucosyl)-L-seryl-[protein] + GDP + H(+). Its pathway is protein modification; protein glycosylation. In terms of biological role, protein O-fucosyltransferase that specifically catalyzes O-fucosylation of serine or threonine residues in EMI domains of target proteins, such as MMRN1, MMRN2 and EMID1. Attaches fucose through an O-glycosidic linkage. O-fucosylation of EMI domain-containing proteins may be required for facilitating protein folding and secretion. May also show alpha-(1,3)-fucosyltransferase activity toward the innermost N-acetyl glucosamine (GlcNAc) residue in biantennary N-glycan acceptors. However, this was tested with a library of synthetic substrates and this activity is unsure in vivo. May be involved in biosynthesis of Lewis X-carrying biantennary N-glycans that regulate neuron stem cell self-renewal during brain development. In Bos taurus (Bovine), this protein is GDP-fucose protein O-fucosyltransferase 3 (FUT10).